Here is a 70-residue protein sequence, read N- to C-terminus: Small ribosomal subunit protein bS21A (70 aa).

This sequence belongs to the bacterial ribosomal protein bS21 family.

The sequence is that of Small ribosomal subunit protein bS21A from Burkholderia orbicola (strain AU 1054).